We begin with the raw amino-acid sequence, 270 residues long: Putative postmeiotic segregation increased 2-like protein 11 (270 aa).

The protein belongs to the DNA mismatch repair MutL/HexB family.

This chain is Putative postmeiotic segregation increased 2-like protein 11 (PMS2P11), found in Homo sapiens (Human).